We begin with the raw amino-acid sequence, 346 residues long: DNA primase small subunit PriS (346 aa).

Active-site residues include aspartate 95 and aspartate 97. Cysteine 106, histidine 108, cysteine 114, and cysteine 117 together coordinate Zn(2+). The Zinc knuckle motif motif lies at 106-117 (CEHEPGTVCPIC). The active site involves aspartate 280.

The protein belongs to the eukaryotic-type primase small subunit family. As to quaternary structure, heterodimer of a small subunit (PriS) and a large subunit (PriL). The cofactor is Mg(2+). Requires Mn(2+) as cofactor.

Functionally, catalytic subunit of DNA primase, an RNA polymerase that catalyzes the synthesis of short RNA molecules used as primers for DNA polymerase during DNA replication. The small subunit contains the primase catalytic core and has DNA synthesis activity on its own. Binding to the large subunit stabilizes and modulates the activity, increasing the rate of DNA synthesis while decreasing the length of the DNA fragments, and conferring RNA synthesis capability. The DNA polymerase activity may enable DNA primase to also catalyze primer extension after primer synthesis. May also play a role in DNA repair. The protein is DNA primase small subunit PriS of Pyrococcus horikoshii (strain ATCC 700860 / DSM 12428 / JCM 9974 / NBRC 100139 / OT-3).